The chain runs to 885 residues: DNA mismatch repair protein MutS (885 aa).

Residue 626-633 (GPNMGGKS) coordinates ATP.

It belongs to the DNA mismatch repair MutS family.

In terms of biological role, this protein is involved in the repair of mismatches in DNA. It is possible that it carries out the mismatch recognition step. This protein has a weak ATPase activity. This chain is DNA mismatch repair protein MutS, found in Burkholderia cenocepacia (strain ATCC BAA-245 / DSM 16553 / LMG 16656 / NCTC 13227 / J2315 / CF5610) (Burkholderia cepacia (strain J2315)).